The primary structure comprises 83 residues: Alpha-toxin CvIV4 (83 aa).

Positions 1–19 are cleaved as a signal peptide; the sequence is MNYFILILVAALLILDVNC. An LCN-type CS-alpha/beta domain is found at 21 to 79; sequence KDGYPVEHSGCKYTCWKNEYCDKVCKDLKGEGGYCYINLTCWCTGLPDNVPLKTNQRCN. Disulfide bonds link C31–C78, C35–C55, C41–C61, and C45–C63.

The protein belongs to the long (4 C-C) scorpion toxin superfamily. Sodium channel inhibitor family. As to expression, expressed by the venom gland.

It localises to the secreted. Functionally, this toxin significantly slows the fast inactivation of Nav1.2/SCN2A (EC(50)=580 nM), Nav1.3/SCN3A (EC(50)=1310 nM), Nav1.4/SCN4A (EC(50)=530 nM), and Nav1.7/SCN9A (EC(50)=1340 nM). The toxin does not affect the peak amplitude of Nav1.7 currents. On all channels cited above, the toxin requires depolarizing potentials to slow channel inactivation. In addition, the toxin has no or very weak effects on the voltage-dependence of steady-state inactivation, and on voltage-dependence of activation. In vivo, it produces paw licking in mice equivalent to the effects of whole venom. The sequence is that of Alpha-toxin CvIV4 from Centruroides vittatus (Striped bark scorpion).